The sequence spans 185 residues: dTTP/UTP pyrophosphatase (185 aa).

Catalysis depends on Asp-64, which acts as the Proton acceptor.

Belongs to the Maf family. YhdE subfamily. The cofactor is a divalent metal cation.

It localises to the cytoplasm. The enzyme catalyses dTTP + H2O = dTMP + diphosphate + H(+). It carries out the reaction UTP + H2O = UMP + diphosphate + H(+). Its function is as follows. Nucleoside triphosphate pyrophosphatase that hydrolyzes dTTP and UTP. May have a dual role in cell division arrest and in preventing the incorporation of modified nucleotides into cellular nucleic acids. This Leptospira borgpetersenii serovar Hardjo-bovis (strain JB197) protein is dTTP/UTP pyrophosphatase.